The sequence spans 235 residues: Phosphoribosylaminoimidazole-succinocarboxamide synthase (235 aa).

The protein belongs to the SAICAR synthetase family.

It catalyses the reaction 5-amino-1-(5-phospho-D-ribosyl)imidazole-4-carboxylate + L-aspartate + ATP = (2S)-2-[5-amino-1-(5-phospho-beta-D-ribosyl)imidazole-4-carboxamido]succinate + ADP + phosphate + 2 H(+). The protein operates within purine metabolism; IMP biosynthesis via de novo pathway; 5-amino-1-(5-phospho-D-ribosyl)imidazole-4-carboxamide from 5-amino-1-(5-phospho-D-ribosyl)imidazole-4-carboxylate: step 1/2. The chain is Phosphoribosylaminoimidazole-succinocarboxamide synthase from Streptococcus gordonii (strain Challis / ATCC 35105 / BCRC 15272 / CH1 / DL1 / V288).